A 236-amino-acid polypeptide reads, in one-letter code: Eukaryotic translation initiation factor 3 subunit J (236 aa).

A disordered region spans residues 1–84 (MADDWESAAD…LREEEAEAER (84 aa)). Residues 28 to 46 (GEDEDEDIKDSWEDEEEKK) show a composition bias toward acidic residues. 2 stretches are compositionally biased toward basic and acidic residues: residues 47–58 (DEEKPTKTEAPA) and 68–77 (AKLEQQALRE).

The protein belongs to the eIF-3 subunit J family. In terms of assembly, component of the eukaryotic translation initiation factor 3 (eIF-3) complex. The eIF-3 complex interacts with pix.

Its subcellular location is the cytoplasm. Its function is as follows. Component of the eukaryotic translation initiation factor 3 (eIF-3) complex, which is involved in protein synthesis of a specialized repertoire of mRNAs and, together with other initiation factors, stimulates binding of mRNA and methionyl-tRNAi to the 40S ribosome. The eIF-3 complex specifically targets and initiates translation of a subset of mRNAs involved in cell proliferation. This chain is Eukaryotic translation initiation factor 3 subunit J, found in Drosophila sechellia (Fruit fly).